The primary structure comprises 353 residues: Anthranilate phosphoribosyltransferase (353 aa).

Residues Gly79, 82–83 (GD), Thr87, 89–92 (NIST), 107–115 (KHGNHSFTS), and Ser119 contribute to the 5-phospho-alpha-D-ribose 1-diphosphate site. An anthranilate-binding site is contributed by Gly79. Position 91 (Ser91) interacts with Mg(2+). An anthranilate-binding site is contributed by Asn110. Position 165 (Arg165) interacts with anthranilate. 2 residues coordinate Mg(2+): Asp223 and Glu224.

The protein belongs to the anthranilate phosphoribosyltransferase family. In terms of assembly, homodimer. It depends on Mg(2+) as a cofactor.

The enzyme catalyses N-(5-phospho-beta-D-ribosyl)anthranilate + diphosphate = 5-phospho-alpha-D-ribose 1-diphosphate + anthranilate. It functions in the pathway amino-acid biosynthesis; L-tryptophan biosynthesis; L-tryptophan from chorismate: step 2/5. Catalyzes the transfer of the phosphoribosyl group of 5-phosphorylribose-1-pyrophosphate (PRPP) to anthranilate to yield N-(5'-phosphoribosyl)-anthranilate (PRA). The chain is Anthranilate phosphoribosyltransferase from Methanococcoides burtonii (strain DSM 6242 / NBRC 107633 / OCM 468 / ACE-M).